We begin with the raw amino-acid sequence, 548 residues long: Glucose-6-phosphate isomerase (548 aa).

Catalysis depends on E355, which acts as the Proton donor. Residues H386 and K511 contribute to the active site.

The protein belongs to the GPI family.

The protein localises to the cytoplasm. The enzyme catalyses alpha-D-glucose 6-phosphate = beta-D-fructose 6-phosphate. The protein operates within carbohydrate biosynthesis; gluconeogenesis. It participates in carbohydrate degradation; glycolysis; D-glyceraldehyde 3-phosphate and glycerone phosphate from D-glucose: step 2/4. In terms of biological role, catalyzes the reversible isomerization of glucose-6-phosphate to fructose-6-phosphate. This is Glucose-6-phosphate isomerase from Wigglesworthia glossinidia brevipalpis.